The sequence spans 728 residues: Protein psiK (728 aa).

An N-terminal signal peptide occupies residues Met-1–Ala-20. Topologically, residues Val-21 to Ser-666 are extracellular. N-linked (GlcNAc...) asparagine glycans are attached at residues Asn-61, Asn-74, and Asn-104. Residues Met-118–Asn-266 enclose the PA14 domain. 6 N-linked (GlcNAc...) asparagine glycosylation sites follow: Asn-272, Asn-326, Asn-335, Asn-438, Asn-543, and Asn-638. Residues Val-667–Ala-687 form a helical membrane-spanning segment. At Gly-688–Asn-728 the chain is on the cytoplasmic side.

Belongs to the prespore-cell-inducing factor family.

The protein resides in the membrane. In Dictyostelium discoideum (Social amoeba), this protein is Protein psiK (psiK).